A 556-amino-acid chain; its full sequence is (-)-alpha-pinene synthase (556 aa).

Positions 309, 313, 453, and 461 each coordinate Mg(2+). A DDXXD motif motif is present at residues 309–313 (DDMYD).

The protein belongs to the terpene synthase family. Tpsa subfamily. Requires Mg(2+) as cofactor. Mn(2+) is required as a cofactor. As to expression, expressed in ripe fruits and roots. Not detected in vegetative tissues.

The protein resides in the cytoplasm. It is found in the cytosol. The catalysed reaction is (2E)-geranyl diphosphate = (1S,5S)-alpha-pinene + diphosphate. It functions in the pathway secondary metabolite biosynthesis; terpenoid biosynthesis. Functionally, monoterpene synthase catalyzing the production of (-)-alpha-pinene, beta-phellandrene and beta-myrcene as the major products. Unable to use farnesyl diphosphate as substrate. Exclusively expressed in the fruit of wild strawberries. Not detected in cultivated varieties. This Fragaria vesca (Woodland strawberry) protein is (-)-alpha-pinene synthase.